Here is a 272-residue protein sequence, read N- to C-terminus: Phosphonates import ATP-binding protein PhnC 1 (272 aa).

Residues 2–246 (LRIQALTKTY…VLTSIYGEED (245 aa)) form the ABC transporter domain. Residue 35–42 (GPSGAGKS) coordinates ATP.

It belongs to the ABC transporter superfamily. Phosphonates importer (TC 3.A.1.9.1) family. The complex is composed of two ATP-binding proteins (PhnC), two transmembrane proteins (PhnE) and a solute-binding protein (PhnD).

It is found in the cell inner membrane. The catalysed reaction is phosphonate(out) + ATP + H2O = phosphonate(in) + ADP + phosphate + H(+). Its function is as follows. Part of the ABC transporter complex PhnCDE involved in phosphonates import. Responsible for energy coupling to the transport system. In Rhodopseudomonas palustris (strain BisB18), this protein is Phosphonates import ATP-binding protein PhnC 1.